Reading from the N-terminus, the 360-residue chain is Glutamate 5-kinase (360 aa).

Lysine 7 provides a ligand contact to ATP. Substrate is bound by residues serine 47, aspartate 134, and asparagine 146. ATP-binding positions include 166 to 167 (TD) and 210 to 216 (TGGISTK). The region spanning 275-356 (VGKITLDDGA…SSIIVVHRDV (82 aa)) is the PUA domain.

Belongs to the glutamate 5-kinase family.

Its subcellular location is the cytoplasm. The catalysed reaction is L-glutamate + ATP = L-glutamyl 5-phosphate + ADP. Its pathway is amino-acid biosynthesis; L-proline biosynthesis; L-glutamate 5-semialdehyde from L-glutamate: step 1/2. Catalyzes the transfer of a phosphate group to glutamate to form L-glutamate 5-phosphate. This Prochlorococcus marinus (strain MIT 9301) protein is Glutamate 5-kinase.